The primary structure comprises 519 residues: Cytosol aminopeptidase (519 aa).

Phosphoserine is present on Ser-42. Lys-45 carries the N6-succinyllysine modification. At Ser-54 the chain carries Phosphoserine. Residues Lys-61 and Lys-103 each carry the N6-succinyllysine modification. 2 positions are modified to phosphoserine: Ser-180 and Ser-194. 3 residues coordinate Zn(2+): Leu-202, Met-203, and Thr-205. Lys-221 carries the post-translational modification N6-acetyllysine; alternate. Position 221 is an N6-succinyllysine; alternate (Lys-221). The residue at position 238 (Ser-238) is a Phosphoserine. Residues Lys-282 and Asp-287 each coordinate Zn(2+). Positions 282, 287, 292, and 294 each coordinate substrate. Asp-287 is a binding site for Mg(2+). Lys-294 is a catalytic residue. The Zn(2+) site is built by Arg-303, Asp-305, Asp-364, and Glu-366. Residues Asp-305 and Asp-364 each coordinate substrate. Residues Asp-364 and Glu-366 each coordinate Mg(2+). The active site involves Arg-368. Position 455 is an N6-acetyllysine; alternate (Lys-455). At Lys-455 the chain carries N6-succinyllysine; alternate. An N6-succinyllysine modification is found at Lys-476. An N6-acetyllysine; alternate modification is found at Lys-489. Lys-489 is modified (N6-succinyllysine; alternate).

It belongs to the peptidase M17 family. In terms of assembly, homohexamer. Requires Zn(2+) as cofactor. Mn(2+) is required as a cofactor.

The protein resides in the cytoplasm. It carries out the reaction Release of an N-terminal amino acid, Xaa-|-Yaa-, in which Xaa is preferably Leu, but may be other amino acids including Pro although not Arg or Lys, and Yaa may be Pro. Amino acid amides and methyl esters are also readily hydrolyzed, but rates on arylamides are exceedingly low.. The enzyme catalyses an S-substituted L-cysteinylglycine + H2O = an S-substituted L-cysteine + glycine. The catalysed reaction is L-cysteinylglycine + H2O = L-cysteine + glycine. It catalyses the reaction S-benzyl-L-cysteinylglycine + H2O = S-benzyl-L-cysteine + glycine. It carries out the reaction Release of N-terminal proline from a peptide.. Cytosolic metallopeptidase that catalyzes the removal of unsubstituted N-terminal hydrophobic amino acids from various peptides. The presence of Zn(2+) ions is essential for the peptidase activity, and the association with other cofactors can modulate the substrate spectificity of the enzyme. For instance, in the presence of Mn(2+), it displays a specific Cys-Gly hydrolyzing activity of Cys-Gly-S-conjugates. Involved in the metabolism of glutathione and in the degradation of glutathione S-conjugates, which may play a role in the control of the cell redox status. The polypeptide is Cytosol aminopeptidase (Sus scrofa (Pig)).